An 894-amino-acid chain; its full sequence is MDGMGEGPDGMGFDMPMLMNQQPHLFGGYSRDSSRGSPLNNVLSNPTYNEEPGMAGEDNNDAKRRRIARACDMCRKKKIKCDGKMPKCSHCINYRTDCVFTQVEKKRNPPKGAKYIEGLENRLGRMESLLRLSGLLSEDDGKTDLGTLEKRLADRSLGNTALNSLKSPTNKFNGSSATSQSQHTTASRHSTPRMDSHSSPHTAATSPNSPKESETEVEGLSDMMCSLVTNNCGETRYIGSSSGFSIFSPKGIQWVNEKTGDTSFQEMISSAYVDDNKWMYWKPEIFSDIFARRVFKPLPPKEEALSLFRDFFENFNCMFPLFHEPTFMHLVERQYSRDPYEGSGWWASINVVLAIAHRLRVMSNLVPQEEDKKAWLYLKNAMGVLTELTMRNTDLLSVQALLGMSLFLQGTPNPQPSFFLVAAAIRLSHSIGLHKRGSGFGLNPVEVEQRKRVFWIAYLLDKDICLRSGRPPVQDDDDMNVELPSEDPPDNIGNVPLSDGKGKFNLFRTLCRFATIESKVYKRLYSAKASKQSDGELLNTIGELDRELEEWKDSIPIDFRPEHEIKASHTPLILHVVVLHFSYYNCLTTIHRMSVHHGYWTSRLSNYAIQGLNARPLNPRVFLSAVLCVTAARASINLIKYIPHGDFACVWLILYYPVSALVTLFANILQNPNDARARSDVKLMNVVVNFLSTLVSDESNGSIKRMLGLCGEFERIAQVVLDKAEKESHSKKKRKAAPDEPQDLRQKTPDENSVPSPSTKRPTGAPPTATLFPSSSYPINLGNTGPDMSNPTRAFAPGQTVLGTNGVPTSMQESMHTMSGMGHDFPEMLSPNNMDSVGFGDQQPFGTPTETPMTSFQQPFVPQDLWQMPMTIEWDWADMSSNFPVFEGTPNTGP.

The segment at residues 71 to 98 (CDMCRKKKIKCDGKMPKCSHCINYRTDC) is a DNA-binding region (zn(2)-C6 fungal-type). Over residues 159-174 (NTALNSLKSPTNKFNG) the composition is skewed to polar residues. The disordered stretch occupies residues 159-219 (NTALNSLKSP…PKESETEVEG (61 aa)). The span at 175 to 189 (SSATSQSQHTTASRH) shows a compositional bias: low complexity. Over residues 199–210 (SPHTAATSPNSP) the composition is skewed to polar residues. The helical transmembrane segment at 649–669 (CVWLILYYPVSALVTLFANIL) threads the bilayer. Residues 724 to 797 (AEKESHSKKK…MSNPTRAFAP (74 aa)) are disordered. Residues 736–750 (AAPDEPQDLRQKTPD) are compositionally biased toward basic and acidic residues. Composition is skewed to polar residues over residues 751–761 (ENSVPSPSTKR) and 771–792 (LFPSSSYPINLGNTGPDMSNPT).

The protein resides in the nucleus. It is found in the membrane. Its function is as follows. Transcription factor that regulates expression of the genes related to resistance to azole compounds. This is ABC-transporter-regulating transcription factor from Aspergillus oryzae (strain ATCC 42149 / RIB 40) (Yellow koji mold).